A 395-amino-acid polypeptide reads, in one-letter code: Flap endonuclease 1 (395 aa).

An N-domain region spans residues 1–104 (MGIKQLFQII…GELAKRFQRK (104 aa)). Aspartate 34 contributes to the Mg(2+) binding site. Arginine 47 and arginine 70 together coordinate DNA. 5 residues coordinate Mg(2+): aspartate 86, glutamate 158, glutamate 160, aspartate 179, and aspartate 181. The tract at residues 122-253 (DIEKFSRRTV…TTALKLIRDH (132 aa)) is I-domain. Glutamate 158 serves as a coordination point for DNA. DNA contacts are provided by glycine 231 and aspartate 233. Aspartate 233 contributes to the Mg(2+) binding site. The interaction with PCNA stretch occupies residues 341 to 349 (QQARLEGFF). Residues 344 to 395 (RLEGFFKPVPKTDAQKAAHKRKLEEKNEEKKKKLKQEKKDKAAAKSKPRGAA) are disordered. Positions 365 to 386 (KLEEKNEEKKKKLKQEKKDKAA) are enriched in basic and acidic residues.

Belongs to the XPG/RAD2 endonuclease family. FEN1 subfamily. Interacts with PCNA. Three molecules of FEN1 bind to one PCNA trimer with each molecule binding to one PCNA monomer. PCNA stimulates the nuclease activity without altering cleavage specificity. Mg(2+) is required as a cofactor. Post-translationally, phosphorylated. Phosphorylation upon DNA damage induces relocalization to the nuclear plasma.

It is found in the nucleus. The protein resides in the nucleolus. The protein localises to the nucleoplasm. Its subcellular location is the mitochondrion. Functionally, structure-specific nuclease with 5'-flap endonuclease and 5'-3' exonuclease activities involved in DNA replication and repair. During DNA replication, cleaves the 5'-overhanging flap structure that is generated by displacement synthesis when DNA polymerase encounters the 5'-end of a downstream Okazaki fragment. It enters the flap from the 5'-end and then tracks to cleave the flap base, leaving a nick for ligation. Also involved in the long patch base excision repair (LP-BER) pathway, by cleaving within the apurinic/apyrimidinic (AP) site-terminated flap. Acts as a genome stabilization factor that prevents flaps from equilibrating into structures that lead to duplications and deletions. Also possesses 5'-3' exonuclease activity on nicked or gapped double-stranded DNA, and exhibits RNase H activity. Also involved in replication and repair of rDNA and in repairing mitochondrial DNA. This chain is Flap endonuclease 1, found in Fusarium vanettenii (strain ATCC MYA-4622 / CBS 123669 / FGSC 9596 / NRRL 45880 / 77-13-4) (Fusarium solani subsp. pisi).